Reading from the N-terminus, the 208-residue chain is Rac-like GTP-binding protein ARAC8 (208 aa).

15–22 contributes to the GTP binding site; it reads GDGAVGKT. Positions 37 to 45 match the Effector region motif; that stretch reads YIPTVFDNF. Residues 62 to 66 and 120 to 123 each bind GTP; these read DTAGQ and TKMD. S-palmitoyl cysteine attachment occurs at residues Cys-199 and Cys-205.

Belongs to the small GTPase superfamily. Rho family. Interacts with ICR1. Binds to SPK1. In terms of processing, although this sequence has a C-terminal -CXXX, it is palmitoylated at Cys-205, rather than prenylated.

The protein resides in the membrane. Acts as a negative regulator of abscisic acid (ABA) responses. This chain is Rac-like GTP-binding protein ARAC8 (ARAC8), found in Arabidopsis thaliana (Mouse-ear cress).